Reading from the N-terminus, the 609-residue chain is Glutamine--fructose-6-phosphate aminotransferase [isomerizing] (609 aa).

C2 functions as the Nucleophile; for GATase activity in the catalytic mechanism. A Glutamine amidotransferase type-2 domain is found at 2–219 (CGIFGYLGNQ…SGEFAIVSQG (218 aa)). SIS domains are found at residues 285–426 (LSDV…VHGA) and 458–599 (WAQP…IDCP). The active-site For Fru-6P isomerization activity is the K604.

Homodimer.

The protein resides in the cytoplasm. The enzyme catalyses D-fructose 6-phosphate + L-glutamine = D-glucosamine 6-phosphate + L-glutamate. Its function is as follows. Catalyzes the first step in hexosamine metabolism, converting fructose-6P into glucosamine-6P using glutamine as a nitrogen source. The protein is Glutamine--fructose-6-phosphate aminotransferase [isomerizing] of Chlamydia pneumoniae (Chlamydophila pneumoniae).